Reading from the N-terminus, the 213-residue chain is Thiamine-phosphate synthase (213 aa).

Residues 43–47 (QLRDK) and asparagine 74 each bind 4-amino-2-methyl-5-(diphosphooxymethyl)pyrimidine. The Mg(2+) site is built by aspartate 75 and aspartate 94. A 4-amino-2-methyl-5-(diphosphooxymethyl)pyrimidine-binding site is contributed by serine 113. 2-[(2R,5Z)-2-carboxy-4-methylthiazol-5(2H)-ylidene]ethyl phosphate is bound at residue 142-144 (TAT). Lysine 145 is a 4-amino-2-methyl-5-(diphosphooxymethyl)pyrimidine binding site. 2-[(2R,5Z)-2-carboxy-4-methylthiazol-5(2H)-ylidene]ethyl phosphate contacts are provided by residues glycine 173 and 193–194 (VS).

Belongs to the thiamine-phosphate synthase family. Mg(2+) is required as a cofactor.

It catalyses the reaction 2-[(2R,5Z)-2-carboxy-4-methylthiazol-5(2H)-ylidene]ethyl phosphate + 4-amino-2-methyl-5-(diphosphooxymethyl)pyrimidine + 2 H(+) = thiamine phosphate + CO2 + diphosphate. It carries out the reaction 2-(2-carboxy-4-methylthiazol-5-yl)ethyl phosphate + 4-amino-2-methyl-5-(diphosphooxymethyl)pyrimidine + 2 H(+) = thiamine phosphate + CO2 + diphosphate. The catalysed reaction is 4-methyl-5-(2-phosphooxyethyl)-thiazole + 4-amino-2-methyl-5-(diphosphooxymethyl)pyrimidine + H(+) = thiamine phosphate + diphosphate. Its pathway is cofactor biosynthesis; thiamine diphosphate biosynthesis; thiamine phosphate from 4-amino-2-methyl-5-diphosphomethylpyrimidine and 4-methyl-5-(2-phosphoethyl)-thiazole: step 1/1. In terms of biological role, condenses 4-methyl-5-(beta-hydroxyethyl)thiazole monophosphate (THZ-P) and 2-methyl-4-amino-5-hydroxymethyl pyrimidine pyrophosphate (HMP-PP) to form thiamine monophosphate (TMP). In Psychrobacter sp. (strain PRwf-1), this protein is Thiamine-phosphate synthase.